The primary structure comprises 429 residues: Enolase (429 aa).

Q162 provides a ligand contact to (2R)-2-phosphoglycerate. The Proton donor role is filled by E204. Residues D241, E283, and D310 each coordinate Mg(2+). Positions 335, 364, 365, and 386 each coordinate (2R)-2-phosphoglycerate. K335 serves as the catalytic Proton acceptor.

The protein belongs to the enolase family. It depends on Mg(2+) as a cofactor.

It localises to the cytoplasm. Its subcellular location is the secreted. It is found in the cell surface. The catalysed reaction is (2R)-2-phosphoglycerate = phosphoenolpyruvate + H2O. It functions in the pathway carbohydrate degradation; glycolysis; pyruvate from D-glyceraldehyde 3-phosphate: step 4/5. In terms of biological role, catalyzes the reversible conversion of 2-phosphoglycerate (2-PG) into phosphoenolpyruvate (PEP). It is essential for the degradation of carbohydrates via glycolysis. This is Enolase from Mycolicibacterium gilvum (strain PYR-GCK) (Mycobacterium gilvum (strain PYR-GCK)).